We begin with the raw amino-acid sequence, 438 residues long: Methylenetetrahydrofolate--tRNA-(uracil-5-)-methyltransferase TrmFO (438 aa).

Residue 7–12 (GAGLAG) participates in FAD binding.

This sequence belongs to the MnmG family. TrmFO subfamily. The cofactor is FAD.

It is found in the cytoplasm. The enzyme catalyses uridine(54) in tRNA + (6R)-5,10-methylene-5,6,7,8-tetrahydrofolate + NADH + H(+) = 5-methyluridine(54) in tRNA + (6S)-5,6,7,8-tetrahydrofolate + NAD(+). It catalyses the reaction uridine(54) in tRNA + (6R)-5,10-methylene-5,6,7,8-tetrahydrofolate + NADPH + H(+) = 5-methyluridine(54) in tRNA + (6S)-5,6,7,8-tetrahydrofolate + NADP(+). Catalyzes the folate-dependent formation of 5-methyl-uridine at position 54 (M-5-U54) in all tRNAs. The polypeptide is Methylenetetrahydrofolate--tRNA-(uracil-5-)-methyltransferase TrmFO (Sulfurihydrogenibium sp. (strain YO3AOP1)).